Here is a 111-residue protein sequence, read N- to C-terminus: MEIIKSILYFILAGIFEIGGGYLIWIWLRDGKSYLYGVIGAVILILYGIIPTLQPSNADFGKVYAAYGGIFIVMSILWGWKIDNIVPDKFDLIGGCIALVGVIVIMYAPRG.

4 helical membrane-spanning segments follow: residues 7 to 27 (ILYF…IWIW), 33 to 53 (SYLY…IPTL), 60 to 80 (FGKV…LWGW), and 85 to 105 (IVPD…VIVI).

Belongs to the UPF0060 family.

It localises to the cell membrane. This is UPF0060 membrane protein Cbei_2176 from Clostridium beijerinckii (strain ATCC 51743 / NCIMB 8052) (Clostridium acetobutylicum).